The sequence spans 361 residues: MSGNGNAAAIAEEDTPKMRVIRVGTRKSQLARIQTDSVVATLKALYPGLQFEIIAMSTTGDKILDTALSKIGEKSLFTKELEHALERNEVDLVVHSLKDLPTVLPPGFTIGAVCKRESPYDAVVFHPKFVGKTLETLPEKSVVGTSSLRRAAQLQRKFPHLEFKSIRGNLNTRLRKLDELQEFSAIILATAGLQRMGWQNRVGQILHPEECMYAVGQGALGVEVRAKDQDILDLVGVLHDPETLLRCIAERSFLRHLEGGCSVPVAVHTAIKDGQLYLTGGVWSLNGAETMQDTMQTTIHVPVQHEDGPEDDPQLVGITARNIPRQPQLAAENLGISLATLLLNKGAKNILDVARQLNEAH.

An N-acetylserine modification is found at serine 2. Serine 69 carries the post-translational modification Phosphoserine. N6-acetyllysine is present on lysine 74. Serine 147 is subject to Phosphoserine. Cysteine 261 is subject to S-(dipyrrolylmethanemethyl)cysteine.

The protein belongs to the HMBS family. In terms of assembly, monomer. The cofactor is dipyrromethane.

It localises to the cytoplasm. The protein localises to the cytosol. The catalysed reaction is 4 porphobilinogen + H2O = hydroxymethylbilane + 4 NH4(+). Its pathway is porphyrin-containing compound metabolism; protoporphyrin-IX biosynthesis; coproporphyrinogen-III from 5-aminolevulinate: step 2/4. In terms of biological role, as part of the heme biosynthetic pathway, catalyzes the sequential polymerization of four molecules of porphobilinogen to form hydroxymethylbilane, also known as preuroporphyrinogen. Catalysis begins with the assembly of the dipyrromethane cofactor by the apoenzyme from two molecules of porphobilinogen or from preuroporphyrinogen. The covalently linked cofactor acts as a primer, around which the tetrapyrrole product is assembled. In the last step of catalysis, the product, preuroporphyrinogen, is released, leaving the cofactor bound to the holodeaminase intact. This Bos taurus (Bovine) protein is Porphobilinogen deaminase (HMBS).